The sequence spans 872 residues: uncharacterized protein (872 aa).

Positions 496 to 524 (LQQHHQDISAMQQQILEEKNQLRRATIDV) form a coiled coil. Disordered regions lie at residues 595 to 736 (RPAV…SVQQ) and 844 to 872 (TKEN…PQAV). Polar residues-rich tracts occupy residues 615-659 (QNGN…QTTF) and 670-686 (PYAS…NNVV). Low complexity predominate over residues 687-736 (QQYQSYYDNPSNQQSNQQSNQQSNQQPNQQPNQQPNQQPNQQPNQQSVQQ).

The protein localises to the virion. This is an uncharacterized protein from Acanthamoeba polyphaga mimivirus (APMV).